Reading from the N-terminus, the 241-residue chain is Ribonuclease PH (241 aa).

Phosphate is bound by residues Arg-87 and 125–127 (GTR).

This sequence belongs to the RNase PH family. As to quaternary structure, homohexameric ring arranged as a trimer of dimers.

The enzyme catalyses tRNA(n+1) + phosphate = tRNA(n) + a ribonucleoside 5'-diphosphate. In terms of biological role, phosphorolytic 3'-5' exoribonuclease that plays an important role in tRNA 3'-end maturation. Removes nucleotide residues following the 3'-CCA terminus of tRNAs; can also add nucleotides to the ends of RNA molecules by using nucleoside diphosphates as substrates, but this may not be physiologically important. Probably plays a role in initiation of 16S rRNA degradation (leading to ribosome degradation) during starvation. This is Ribonuclease PH from Dehalococcoides mccartyi (strain ATCC BAA-2100 / JCM 16839 / KCTC 5957 / BAV1).